Consider the following 559-residue polypeptide: MSSDLKRRSRTITDGRTRAGARAMLKAIGFTDEDLAKPIIGIANTWIETMPCNINLRALAARVKEGVRAAGGTPMEFNTVAIADGVTMGTEGMKASLISRDLIADSIELMGRGYMFDAIIALVACDKTIPGAAMGLTRLNIPGFLLYGGSIAPGHWRGKEITIQHVYEAIGAVAAGKMTDEELKEIEDAACPGPGACGGQYTANTMATVMEIIGLSPMGTAAVPAADPRKDSVGYRAGQLIMDVLRRDLKPRDILTRAAFENAIASVALTGGSTNAVLHLLALAREAGVPLTLDDFDAISRRTPLCCDLMPSGKYSAIHVDQAGGIQVIARRLVDGGFAHGDAITVTGRTLAEEAADAVETPGQDVIRPLDNPIKPTGGLLVLRGNLAPEGSVVKLFGYERTYHRGPARVFDGEEAAMAAIVGGEIRPDDIVIIRYEGPRGGPGMREMLGVTSAIVGAGLGQSVSLITDGRFSGATRGVMIGHVAPEAARGGPLAIVQEGDEIEINLDERRVDLLLSEEEIADRLLAWQPPAPRYEWGVMARYGALVSSASEGAVLVTP.

A [2Fe-2S] cluster-binding site is contributed by cysteine 52. Position 84 (aspartate 84) interacts with Mg(2+). Position 125 (cysteine 125) interacts with [2Fe-2S] cluster. The Mg(2+) site is built by aspartate 126 and lysine 127. Lysine 127 carries the N6-carboxylysine modification. Cysteine 197 contacts [2Fe-2S] cluster. Glutamate 447 is a binding site for Mg(2+). Residue serine 473 is the Proton acceptor of the active site.

Belongs to the IlvD/Edd family. In terms of assembly, homodimer. [2Fe-2S] cluster serves as cofactor. Mg(2+) is required as a cofactor.

The catalysed reaction is (2R)-2,3-dihydroxy-3-methylbutanoate = 3-methyl-2-oxobutanoate + H2O. It carries out the reaction (2R,3R)-2,3-dihydroxy-3-methylpentanoate = (S)-3-methyl-2-oxopentanoate + H2O. The protein operates within amino-acid biosynthesis; L-isoleucine biosynthesis; L-isoleucine from 2-oxobutanoate: step 3/4. It participates in amino-acid biosynthesis; L-valine biosynthesis; L-valine from pyruvate: step 3/4. Its function is as follows. Functions in the biosynthesis of branched-chain amino acids. Catalyzes the dehydration of (2R,3R)-2,3-dihydroxy-3-methylpentanoate (2,3-dihydroxy-3-methylvalerate) into 2-oxo-3-methylpentanoate (2-oxo-3-methylvalerate) and of (2R)-2,3-dihydroxy-3-methylbutanoate (2,3-dihydroxyisovalerate) into 2-oxo-3-methylbutanoate (2-oxoisovalerate), the penultimate precursor to L-isoleucine and L-valine, respectively. The sequence is that of Dihydroxy-acid dehydratase from Roseiflexus sp. (strain RS-1).